A 1138-amino-acid chain; its full sequence is MGDFAAPAAAANGSSICINSSLNSSLGGAGIGVNNTPNSTPAAPSSNHPAAGGCGGSGGPGGGSAAVPKHSTVVERLRQRIEGCRRHHVNCENRYQQAQVEQLELERRDTVSLYQRTLEQRAKKSGAGTGKQQHPSKPQQDAEAASAEQRNHTLIMLQETVKRKLEGARSPLNGDQQNGACDGNFSPTSKRIRKDISAGMEAINNLPSNMPLPSASPLHQLDLKPSLPLQNSGTHTPGLLEDLSKNGRLPEIKLPVNGCSDLEDSFTILQSKDLKQEPLDDPTCIDTSETSLSNQNKLFSDINLNDQEWQELIDELANTVPEDDIQDLFNEDFEEKKEPEFSQPATETPLSQESASVKSDPSHSPFAHVSMGSPQARPSSSGPPFSTVSTATSLPSVASTPAAPNPASSPANCAVQSPQTPNQAHTPGQAPPRPGNGYLLNPAAVTVAGSASGPVAVPSSDMSPAEQLKQMAAQQQQRAKLMQQKQQQQQQQQQQQQQQQQQQQQQQQQQHSNQTSNWSPLGPPSSPYGAAFTAEKPNSPMMYPQAFNNQNPIVPPMANNLQKTTMNNYLPQNHMNMINQQPNNLGTNSLNKQHNILTYGNTKPLTHFNADLSQRMTPPVANPNKNPLMPYIQQQQQQQQQQQQQQQQQQPPPPQLQAPRAHLSEDQKRLLLMKQKGVMNQPMAYAALPSHGQEQHPVGLPRTTGPMQSSVPPGSGGMVSGASPAGPGFLGSQPQAAIMKQMLIDQRAQLIEQQKQQFLREQRQQQQQQQQQILAEQQLQQSHLPRQHLQPQRNPYPVQQVNQFQGSPQDIAAVRSQAALQSMRTSRLMAQNAGMMGIGPSQNPGTMATAAAQSEMGLAPYSTTPTSQPGMYNMSTGMTQMLQHPNQSGMSITHNQAQGPRQPASGQGVGMVSGFGQSMLVNSAITQQHPQMKGPVGQALPRPQAPPRLQSLMGTVQQGAQSWQQRSLQGMPGRTSGELGPFNNGASYPLQAGQPRLTKQHFPQGLSQSVVDANTGTVRTLNPAAMGRQMMPSLPGQQGTSQARPMVMSGLSQGVPGMPAFSQPPAQQQIPSGSFAPSSQSQAYERNAPQDVSYNYSGDGAGGSFPGLPDGADLVDSIIKGGPGDEWMQELDELFGNP.

Over residues 37–48 (PNSTPAAPSSNH) the composition is skewed to polar residues. Disordered stretches follow at residues 37–68 (PNSTPAAPSSNHPAAGGCGGSGGPGGGSAAVP), 119–148 (EQRAKKSGAGTGKQQHPSKPQQDAEAASAE), 169–188 (RSPLNGDQQNGACDGNFSPT), 207–237 (PSNMPLPSASPLHQLDLKPSLPLQNSGTHTP), 334–480 (EEKK…QRAK), and 503–547 (QQQQ…PQAF). A compositionally biased stretch (gly residues) spans 52-64 (GGCGGSGGPGGGS). Composition is skewed to polar residues over residues 130 to 139 (GKQQHPSKPQ) and 173 to 188 (NGDQQNGACDGNFSPT). 2 stretches are compositionally biased toward polar residues: residues 343–359 (QPATETPLSQESASVKS) and 372–394 (GSPQARPSSSGPPFSTVSTATSL). A compositionally biased stretch (low complexity) spans 395–411 (PSVASTPAAPNPASSPA). Positions 414 to 426 (AVQSPQTPNQAHT) are enriched in polar residues. Positions 467–480 (QLKQMAAQQQQRAK) are enriched in low complexity. The residue at position 603 (lysine 603) is an N6-acetyllysine. 5 disordered regions span residues 615-662 (RMTP…PRAH), 691-721 (HGQEQHPVGLPRTTGPMQSSVPPGSGGMVSG), 968-991 (LQGMPGRTSGELGPFNNGASYPLQ), 1024-1084 (AAMG…SQAY), and 1090-1109 (QDVSYNYSGDGAGGSFPGLP). Residues 633–649 (QQQQQQQQQQQQQQQQQ) show a composition bias toward low complexity. Residues 1064 to 1084 (PPAQQQIPSGSFAPSSQSQAY) show a composition bias toward polar residues.

Belongs to the mastermind family. In terms of assembly, interacts through its N-terminal region with the ankyrin repeat region of the Notch proteins NOTCH1, NOTCH2, NOTCH3 and NOTCH4. Forms a DNA-binding complex with Notch proteins and RBPSUH/RBP-J kappa.

It is found in the nucleus speckle. In terms of biological role, acts as a transcriptional coactivator for NOTCH proteins. Has been shown to amplify NOTCH-induced transcription of HES1. The chain is Mastermind-like protein 3 from Homo sapiens (Human).